Here is a 690-residue protein sequence, read N- to C-terminus: Protein SPT2 homolog (690 aa).

An important for interaction with DNA region spans residues 1–579 (MDFHNILVMA…PGHRPVFRPQ (579 aa)). Positions 40–82 (ESAAVQAFLRRKEEEKRKKELEEKRKKERLLAKRIELKHDRKA) form a coiled coil. Disordered regions lie at residues 105 to 167 (PKKR…APAP) and 186 to 619 (EIKV…QEEI). The span at 186-228 (EIKVVKKIEERPRTAEELREREYLERKNKRVETQKKKSEKEVK) shows a compositional bias: basic and acidic residues. Residues 229–243 (SAGISSSSKKATSLK) are compositionally biased toward low complexity. 2 stretches are compositionally biased toward basic and acidic residues: residues 244-259 (ECADAKLSRSAADKHA) and 271-285 (TDKKPKAPALTEKHS). A compositionally biased stretch (polar residues) spans 369-380 (HETNSSAKRPSS). Residues 383–396 (GKGGSGHPAGGSSA) show a composition bias toward gly residues. Residues 397 to 442 (GPGRSSSNSGTGPGRPGSVSSPGPGRQGSSSAAGPGRPSSSSSLGP) show a composition bias toward low complexity. 3 stretches are compositionally biased toward gly residues: residues 443–457 (GRLGSGSGVGPGRPG), 465–477 (GRPGGSSGTGPGR), and 489–521 (LGSGMGTGPGRPGVGPSAGPGRPGSSSGTGPGR). Polar residues predominate over residues 545–565 (VSETISSKNLVTRPSNGQING). An important for interaction with histones region spans residues 580–690 (GIGRPPVGYK…KRQSKKLRTR (111 aa)). The segment covering 593–617 (DDDDDDDEYDSEMDDFIEDEGEPQE) has biased composition (acidic residues). A coiled-coil region spans residues 650 to 690 (REQQKEEARSLRLGVQEDLEELRREEEELKRKRQSKKLRTR).

The protein belongs to the SPT2 family. As to quaternary structure, interacts with POLR1A. Interacts with histones. Interacts with a heterotetrameric complex formed by histone H3 and H4, especially when the histone tetramer is not bound to DNA.

The protein localises to the nucleus. Its subcellular location is the nucleolus. Histone chaperone that stabilizes pre-existing histone tetramers and regulates replication-independent histone exchange on chromatin. Required for normal chromatin refolding in the coding region of transcribed genes, and for the suppression of spurious transcription. Binds DNA and histones and promotes nucleosome assembly (in vitro). Modulates RNA polymerase 1-mediated transcription. Required for optimal growth in the presence of the DNA damaging agents actinomycin D or mitomycin C (in vitro). Facilitates formation of tetrameric histone complexes containing histone H3 and H4. Modulates RNA polymerase 1-mediated transcription. Binds DNA, with a preference for branched DNA species, such as Y-form DNA and Holliday junction DNA. The sequence is that of Protein SPT2 homolog (SPTY2D1) from Gallus gallus (Chicken).